The sequence spans 2157 residues: DExH-box ATP-dependent RNA helicase DExH14 (2157 aa).

Positions 374 to 394 are disordered; the sequence is KAASNTQSRMPTYGTQVTVQT. Polar residues predominate over residues 375-394; the sequence is AASNTQSRMPTYGTQVTVQT. The Helicase ATP-binding 1 domain maps to 517 to 699; sequence QTVYHTNENI…FLRVNTDTGL (183 aa). Position 530–537 (530–537) interacts with ATP; it reads APTGAGKT. The DEVH box signature appears at 641–644; the sequence is DEVH. A Helicase C-terminal 1 domain is found at 734 to 932; the sequence is CYKKVVDSIK…SLKDNLNAEV (199 aa). Positions 1008–1315 constitute an SEC63 1 domain; it reads CTELGRVASH…LHAETYFTIS (308 aa). One can recognise a Helicase ATP-binding 2 domain in the interval 1365–1540; sequence HVLYHTDNNV…WLGVGEIGLF (176 aa). 1378 to 1385 contributes to the ATP binding site; sequence APTGSGKT. Positions 1482-1485 match the DEIH box motif; the sequence is DEIH. In terms of domain architecture, Helicase C-terminal 2 spans 1571–1780; sequence NKPAYAAICT…GTIGNKEDAV (210 aa). Positions 1839–2150 constitute an SEC63 2 domain; it reads PTMLGTIASQ…YLGFEQEHSI (312 aa).

This sequence belongs to the DExH box helicase family.

It localises to the nucleus. The enzyme catalyses ATP + H2O = ADP + phosphate + H(+). RNA helicase that plays an essential role in pre-mRNA splicing as component of the U5 snRNP and U4/U6-U5 tri-snRNP complexes. Involved in spliceosome assembly, activation and disassembly. This Arabidopsis thaliana (Mouse-ear cress) protein is DExH-box ATP-dependent RNA helicase DExH14.